The sequence spans 175 residues: uncharacterized protein (175 aa).

Positions 1-14 (MNTSSRIQLPSSND) are enriched in polar residues. 2 disordered regions span residues 1–31 (MNTS…SKRS) and 127–175 (ARSR…QSKR). Residues 16–27 (HVYDGRSNEPKA) are compositionally biased toward basic and acidic residues. Residues 130-149 (RASSVSNSRLNSRTNSSVSL) show a composition bias toward low complexity. The segment covering 154–175 (GSSSWKNKIKNAVSNVTDQSKR) has biased composition (polar residues).

Its subcellular location is the cytoplasm. The protein localises to the nucleus. This is an uncharacterized protein from Schizosaccharomyces pombe (strain 972 / ATCC 24843) (Fission yeast).